Here is a 93-residue protein sequence, read N- to C-terminus: Large ribosomal subunit protein mL41 (93 aa).

A mitochondrion-targeting transit peptide spans 1-13 (MHQSLLCFGARRL).

The protein belongs to the mitochondrion-specific ribosomal protein mL41 family. In terms of assembly, component of the mitochondrial large ribosomal subunit (mt-LSU). Mature yeast 74S mitochondrial ribosomes consist of a small (37S) and a large (54S) subunit. The 37S small subunit contains a 15S ribosomal RNA (15S mt-rRNA) and at least 32 different proteins. The 54S large subunit contains a 21S rRNA (21S mt-rRNA) and at least 45 different proteins.

Its subcellular location is the mitochondrion. Its function is as follows. Component of the mitochondrial ribosome (mitoribosome), a dedicated translation machinery responsible for the synthesis of mitochondrial genome-encoded proteins, including at least some of the essential transmembrane subunits of the mitochondrial respiratory chain. The mitoribosomes are attached to the mitochondrial inner membrane and translation products are cotranslationally integrated into the membrane. The polypeptide is Large ribosomal subunit protein mL41 (mrpl27) (Schizosaccharomyces pombe (strain 972 / ATCC 24843) (Fission yeast)).